A 563-amino-acid polypeptide reads, in one-letter code: Delta-1-pyrroline-5-carboxylate dehydrogenase, mitochondrial (563 aa).

The transit peptide at 1–24 (MLLPAPALRRALLSRPWTGAGLRW) directs the protein to the mitochondrion. K31 is subject to N6-succinyllysine. S44 is subject to Phosphoserine. Position 52 is an N6-acetyllysine (K52). K93, K99, K114, K130, and K175 each carry N6-acetyllysine; alternate. N6-succinyllysine; alternate is present on residues K93, K99, K114, K130, and K175. Residues S208, K233, and 286 to 290 (GSVPT) contribute to the NAD(+) site. E314 acts as the Proton acceptor in catalysis. The residue at position 318 (K318) is an N6-acetyllysine. K347 carries the N6-succinyllysine modification. Residue C348 is the Nucleophile of the active site. N6-acetyllysine is present on residues K365 and K376. K395 is modified (N6-succinyllysine). E447 serves as a coordination point for NAD(+). K462 carries the N6-acetyllysine modification. K509 is subject to N6-acetyllysine; alternate. K509 carries the N6-succinyllysine; alternate modification. S513 lines the substrate pocket. N6-acetyllysine is present on residues K531 and K552.

It belongs to the aldehyde dehydrogenase family. As to quaternary structure, homodimer. In terms of tissue distribution, highest expression is found in liver followed by skeletal muscle, kidney, heart, brain, placenta, lung and pancreas.

It is found in the mitochondrion matrix. It catalyses the reaction L-glutamate 5-semialdehyde + NAD(+) + H2O = L-glutamate + NADH + 2 H(+). It functions in the pathway amino-acid degradation; L-proline degradation into L-glutamate; L-glutamate from L-proline: step 2/2. In terms of biological role, irreversible conversion of delta-1-pyrroline-5-carboxylate (P5C), derived either from proline or ornithine, to glutamate. This is a necessary step in the pathway interconnecting the urea and tricarboxylic acid cycles. The preferred substrate is glutamic gamma-semialdehyde, other substrates include succinic, glutaric and adipic semialdehydes. This Homo sapiens (Human) protein is Delta-1-pyrroline-5-carboxylate dehydrogenase, mitochondrial (ALDH4A1).